We begin with the raw amino-acid sequence, 635 residues long: DNA mismatch repair protein MutL (635 aa).

The tract at residues 359–399 is disordered; the sequence is GTNKYAQPEAAKSSAAEQAVARERSSARERAAPAYKEDHPY. Residues 364–377 are compositionally biased toward low complexity; the sequence is AQPEAAKSSAAEQA. Positions 378–399 are enriched in basic and acidic residues; that stretch reads VARERSSARERAAPAYKEDHPY.

It belongs to the DNA mismatch repair MutL/HexB family.

Functionally, this protein is involved in the repair of mismatches in DNA. It is required for dam-dependent methyl-directed DNA mismatch repair. May act as a 'molecular matchmaker', a protein that promotes the formation of a stable complex between two or more DNA-binding proteins in an ATP-dependent manner without itself being part of a final effector complex. The chain is DNA mismatch repair protein MutL from Yersinia pestis bv. Antiqua (strain Antiqua).